The chain runs to 438 residues: Putative hydroxypyruvate reductase (438 aa).

The enzyme catalyses (R)-glycerate + NAD(+) = 3-hydroxypyruvate + NADH + H(+). It catalyses the reaction (R)-glycerate + NADP(+) = 3-hydroxypyruvate + NADPH + H(+). It functions in the pathway carbohydrate acid metabolism; tartrate degradation; 3-hydroxypyruvate from D-glycerate: step 1/1. Its function is as follows. Degrades an unidentified toxic product from the first step of tartrate degradation. This is Putative hydroxypyruvate reductase (ttuD) from Agrobacterium vitis (Rhizobium vitis).